The sequence spans 229 residues: Isopentenyl-diphosphate delta-isomerase (229 aa).

Lys-39 is a substrate binding site. Mg(2+)-binding residues include His-43 and His-54. The Nudix hydrolase domain maps to 52–202 (LLHRAFSMFI…QYGFTPWFKL (151 aa)). Residues Gln-72 and Lys-77 each contribute to the substrate site. Cys-89 is a catalytic residue. Ser-90 lines the substrate pocket. Mg(2+) contacts are provided by Glu-152 and Glu-154. Glu-154 is an active-site residue.

It belongs to the IPP isomerase type 1 family. It depends on Mg(2+) as a cofactor.

It is found in the cytoplasm. The protein localises to the nucleus. The enzyme catalyses isopentenyl diphosphate = dimethylallyl diphosphate. The protein operates within isoprenoid biosynthesis; dimethylallyl diphosphate biosynthesis; dimethylallyl diphosphate from isopentenyl diphosphate: step 1/1. Functionally, isopentenyl-diphosphate delta-isomerase; part of the second module of ergosterol biosynthesis pathway that includes the middle steps of the pathway. Idi1 catalyzes the 1,3-allylic rearrangement of isopentenyl (IPP) to its highly electrophilic allylic isomer, dimethylallyl diphosphate (DMAPP). The second module is carried out in the vacuole and involves the formation of farnesyl diphosphate, which is also an important intermediate in the biosynthesis of ubiquinone, dolichol, heme and prenylated proteins. Activity by the mevalonate kinase erg12 first converts mevalonate into 5-phosphomevalonate. 5-phosphomevalonate is then further converted to 5-diphosphomevalonate by the phosphomevalonate kinase erg8. The diphosphomevalonate decarboxylase mvd1 then produces isopentenyl diphosphate. The isopentenyl-diphosphate delta-isomerase idi1 then catalyzes the 1,3-allylic rearrangement of the homoallylic substrate isopentenyl (IPP) to its highly electrophilic allylic isomer, dimethylallyl diphosphate (DMAPP). Finally the farnesyl diphosphate synthase fps1 catalyzes the sequential condensation of isopentenyl pyrophosphate with dimethylallyl pyrophosphate, and then with the resultant geranylpyrophosphate to the ultimate product farnesyl pyrophosphate. This Schizosaccharomyces pombe (strain 972 / ATCC 24843) (Fission yeast) protein is Isopentenyl-diphosphate delta-isomerase.